The chain runs to 315 residues: Probable cell division protein WhiA (315 aa).

The segment at residues 275 to 309 (NLKELGEMVPSGVVSKSGINHRLRKINEIADKIRE) is a DNA-binding region (H-T-H motif).

It belongs to the WhiA family.

Its function is as follows. Involved in cell division and chromosome segregation. The sequence is that of Probable cell division protein WhiA from Brevibacillus brevis (strain 47 / JCM 6285 / NBRC 100599).